Consider the following 296-residue polypeptide: Transposase for insertion sequence element IS629 (296 aa).

The region spanning 125 to 285 (VAERPDQLWV…TPPAEAEKAY (161 aa)) is the Integrase catalytic domain.

In terms of biological role, involved in the transposition of the insertion sequence. This is Transposase for insertion sequence element IS629 from Shigella sonnei.